Reading from the N-terminus, the 376-residue chain is Succinyl-diaminopimelate desuccinylase (376 aa).

Position 67 (histidine 67) interacts with Zn(2+). Aspartate 69 is a catalytic residue. Residue aspartate 100 coordinates Zn(2+). The active-site Proton acceptor is the glutamate 134. Glutamate 135, glutamate 163, and histidine 349 together coordinate Zn(2+).

It belongs to the peptidase M20A family. DapE subfamily. Homodimer. The cofactor is Zn(2+). Requires Co(2+) as cofactor.

The catalysed reaction is N-succinyl-(2S,6S)-2,6-diaminopimelate + H2O = (2S,6S)-2,6-diaminopimelate + succinate. Its pathway is amino-acid biosynthesis; L-lysine biosynthesis via DAP pathway; LL-2,6-diaminopimelate from (S)-tetrahydrodipicolinate (succinylase route): step 3/3. Its function is as follows. Catalyzes the hydrolysis of N-succinyl-L,L-diaminopimelic acid (SDAP), forming succinate and LL-2,6-diaminopimelate (DAP), an intermediate involved in the bacterial biosynthesis of lysine and meso-diaminopimelic acid, an essential component of bacterial cell walls. The sequence is that of Succinyl-diaminopimelate desuccinylase from Shewanella woodyi (strain ATCC 51908 / MS32).